The sequence spans 251 residues: Urease accessory protein UreF (251 aa).

The tract at residues Met-1–Ala-20 is disordered. The span at Pro-9 to Ala-20 shows a compositional bias: low complexity.

The protein belongs to the UreF family. UreD, UreF and UreG form a complex that acts as a GTP-hydrolysis-dependent molecular chaperone, activating the urease apoprotein by helping to assemble the nickel containing metallocenter of UreC. The UreE protein probably delivers the nickel.

The protein localises to the cytoplasm. In terms of biological role, required for maturation of urease via the functional incorporation of the urease nickel metallocenter. In Paracidovorax citrulli (strain AAC00-1) (Acidovorax citrulli), this protein is Urease accessory protein UreF.